Reading from the N-terminus, the 400-residue chain is Enoyl-[acyl-carrier-protein] reductase [NADH] 1 (400 aa).

NAD(+) contacts are provided by residues 48–53, 74–75, 111–112, and 139–140; these read GASSGY, FE, DA, and LA. Tyr225 provides a ligand contact to substrate. Residue Tyr235 is the Proton donor of the active site. NAD(+) contacts are provided by residues Lys244 and 273–275; that span reads VVT.

It belongs to the TER reductase family. In terms of assembly, monomer.

The catalysed reaction is a 2,3-saturated acyl-[ACP] + NAD(+) = a (2E)-enoyl-[ACP] + NADH + H(+). Its pathway is lipid metabolism; fatty acid biosynthesis. Its function is as follows. Involved in the final reduction of the elongation cycle of fatty acid synthesis (FAS II). Catalyzes the reduction of a carbon-carbon double bond in an enoyl moiety that is covalently linked to an acyl carrier protein (ACP). The sequence is that of Enoyl-[acyl-carrier-protein] reductase [NADH] 1 from Vibrio parahaemolyticus serotype O3:K6 (strain RIMD 2210633).